The chain runs to 445 residues: Glycine--tRNA ligase (445 aa).

Residues Arg97 and Glu145 each coordinate substrate. ATP is bound by residues 177 to 179 (RNE), 187 to 192 (FRTCEF), 262 to 263 (EV), and 308 to 311 (GLTR). Position 192 to 196 (192 to 196 (FEQME)) interacts with substrate. Substrate is bound at residue 304–308 (ETSAG).

The protein belongs to the class-II aminoacyl-tRNA synthetase family. Homodimer.

It localises to the cytoplasm. It carries out the reaction tRNA(Gly) + glycine + ATP = glycyl-tRNA(Gly) + AMP + diphosphate. In terms of biological role, catalyzes the attachment of glycine to tRNA(Gly). The polypeptide is Glycine--tRNA ligase (Borrelia garinii subsp. bavariensis (strain ATCC BAA-2496 / DSM 23469 / PBi) (Borreliella bavariensis)).